A 486-amino-acid chain; its full sequence is Cardiolipin synthase A (486 aa).

The next 2 membrane-spanning stretches (helical) occupy residues 3-23 and 38-58; these read TFYT…IAGV and MAWL…YLSF. PLD phosphodiesterase domains lie at 219 to 246 and 399 to 426; these read MDLR…VDPR and KDGL…DMRS. Active-site residues include His224, Lys226, Asp231, His404, Lys406, and Asp411.

Belongs to the phospholipase D family. Cardiolipin synthase subfamily. ClsA sub-subfamily.

It localises to the cell inner membrane. It catalyses the reaction 2 a 1,2-diacyl-sn-glycero-3-phospho-(1'-sn-glycerol) = a cardiolipin + glycerol. Functionally, catalyzes the reversible phosphatidyl group transfer from one phosphatidylglycerol molecule to another to form cardiolipin (CL) (diphosphatidylglycerol) and glycerol. This is Cardiolipin synthase A from Pectobacterium carotovorum subsp. carotovorum (strain PC1).